Here is an 854-residue protein sequence, read N- to C-terminus: Selenocysteine insertion sequence-binding protein 2 (854 aa).

4 disordered regions span residues 332-351 (ADPKNVSIPSSEALSSDPSY), 356-394 (HIIHPTQKSKASQGSDLEQNEASRKNKKKKEKSTSKYEV), 417-445 (ERRDRIETPKFQSKQQPQDNFKNNVKKSQ), and 488-619 (ECAS…PNHT). Polar residues-rich tracts occupy residues 338–350 (SIPSSEALSSDPS) and 361–372 (TQKSKASQGSDL). The Nuclear localization signal motif lies at 380 to 387 (KNKKKKEK). A compositionally biased stretch (polar residues) spans 426-445 (KFQSKQQPQDNFKNNVKKSQ). Over residues 536 to 547 (ILKERQERKQRL) the composition is skewed to basic and acidic residues. Residues 548 to 559 (QENAVSPAFTSD) show a composition bias toward polar residues. Positions 560 to 572 (DTQDGESGGDDQF) are enriched in acidic residues. A compositionally biased stretch (basic and acidic residues) spans 593-611 (VEDKSEEPPGTELQRDTEA). An RNA-binding region spans residues 673–694 (LVLGLREVLKHLKLKKLKCVII). Residues 787-812 (EPRPQAPPSLPTQGPSCPAEDGPPAL) are disordered.

In terms of tissue distribution, expressed at high levels in testis.

The protein localises to the nucleus. Its subcellular location is the mitochondrion. In terms of biological role, mRNA-binding protein that binds to the SECIS (selenocysteine insertion sequence) element present in the 3'-UTR of mRNAs encoding selenoproteins and facilitates the incorporation of the rare amino acid selenocysteine. Insertion of selenocysteine at UGA codons is mediated by SECISBP2 and EEFSEC: SECISBP2 (1) specifically binds the SECIS sequence once the 80S ribosome encounters an in-frame UGA codon and (2) contacts the RPS27A/eS31 of the 40S ribosome before ribosome stalling. (3) GTP-bound EEFSEC then delivers selenocysteinyl-tRNA(Sec) to the 80S ribosome and adopts a preaccommodated state conformation. (4) After GTP hydrolysis, EEFSEC dissociates from the assembly, selenocysteinyl-tRNA(Sec) accommodates, and peptide bond synthesis and selenoprotein elongation occur. The chain is Selenocysteine insertion sequence-binding protein 2 from Homo sapiens (Human).